The primary structure comprises 397 residues: Phosphoglycerate kinase (397 aa).

Substrate is bound by residues aspartate 21–asparagine 23, arginine 36, histidine 59–arginine 62, arginine 119, and arginine 152. ATP-binding positions include lysine 202, glutamate 324, and glycine 354–threonine 357.

The protein belongs to the phosphoglycerate kinase family. As to quaternary structure, monomer.

It is found in the cytoplasm. The enzyme catalyses (2R)-3-phosphoglycerate + ATP = (2R)-3-phospho-glyceroyl phosphate + ADP. Its pathway is carbohydrate degradation; glycolysis; pyruvate from D-glyceraldehyde 3-phosphate: step 2/5. This Cereibacter sphaeroides (strain KD131 / KCTC 12085) (Rhodobacter sphaeroides) protein is Phosphoglycerate kinase.